The sequence spans 193 residues: Interferon type A1/A2 (193 aa).

The signal sequence occupies residues 1 to 31; it reads MAVPASPQHPRGYGILLLTLLLKALATTASA. 3 disulfides stabilise this stretch: cysteine 32/cysteine 129, cysteine 61/cysteine 155, and cysteine 68/cysteine 168. N-linked (GlcNAc...) asparagine glycans are attached at residues asparagine 65, asparagine 71, asparagine 108, and asparagine 186.

Belongs to the alpha/beta interferon family.

Its subcellular location is the secreted. Has antiviral activities. The protein is Interferon type A1/A2 (IFNA1) of Gallus gallus (Chicken).